The following is a 757-amino-acid chain: Kin of IRRE-like protein 1 (757 aa).

Residues 1-16 (MLSLLVWILTLSDTFS) form the signal peptide. At 17–499 (QGTQTRFSQE…REVLPVGIIA (483 aa)) the chain is on the extracellular side. 5 consecutive Ig-like C2-type domains span residues 21–115 (TRFS…AKLT), 120–216 (PEDT…TSIE), 223–299 (PTVT…TNVS), 308–387 (PRIV…EVPL), and 392–488 (PPII…IQLE). A disulfide bridge connects residues Cys-42 and Cys-100. Residues Asn-46 and Asn-140 are each glycosylated (N-linked (GlcNAc...) asparagine). 2 cysteine pairs are disulfide-bonded: Cys-143–Cys-200 and Cys-244–Cys-287. Residue Asn-297 is glycosylated (N-linked (GlcNAc...) asparagine). Residues Cys-329 and Cys-371 are joined by a disulfide bond. A Cell attachment site motif is present at residues 405–407 (RGD). Cys-413 and Cys-472 are disulfide-bonded. Asn-471 is a glycosylation site (N-linked (GlcNAc...) asparagine). Residues 500 to 520 (GATIGASILLIFFFIALVFFL) form a helical membrane-spanning segment. Residues 521–757 (YRRRKGSRKD…RFQQRMQTHV (237 aa)) are Cytoplasmic-facing. Ser-574 bears the Phosphoserine mark. Tyr-605 and Tyr-606 each carry phosphotyrosine; by FYN. Phosphotyrosine occurs at positions 622 and 625. The interval 649-679 (QLNTYSRGPASDYGPEPTPPGPAAPAGTDTT) is disordered. At Tyr-724 the chain carries Phosphotyrosine.

Belongs to the immunoglobulin superfamily. Interacts with TJP1/ZO-1 and with NPHS2/podocin (via the C-terminus). Interacts with NPHS1/nephrin (via the Ig-like domains); this interaction is dependent on KIRREL1 glycosylation. Homodimer (via the Ig-like domains). Interacts when tyrosine-phosphorylated with GRB2. Post-translationally, phosphorylation probably regulates the interaction with NSH2. Phosphorylated at Tyr-605 and Tyr-606 by FYN, leading to GRB2 binding. In terms of processing, N-glycosylated. In terms of tissue distribution, abundantly expressed in kidney. Specifically expressed in podocytes of kidney glomeruli.

Its subcellular location is the cell membrane. Its function is as follows. Required for proper function of the glomerular filtration barrier. It is involved in the maintenance of a stable podocyte architecture with interdigitating foot processes connected by specialized cell-cell junctions, known as the slit diaphragm. It is a signaling protein that needs the presence of TEC kinases to fully trans-activate the transcription factor AP-1. In Homo sapiens (Human), this protein is Kin of IRRE-like protein 1.